Here is a 298-residue protein sequence, read N- to C-terminus: Inosose dehydratase (298 aa).

This sequence belongs to the IolE/MocC family. Glutathione is required as a cofactor. Co(2+) serves as cofactor. Requires Mn(2+) as cofactor.

It carries out the reaction scyllo-inosose = 3D-3,5/4-trihydroxycyclohexane-1,2-dione + H2O. Functionally, catalyzes the dehydration of inosose (2-keto-myo-inositol, 2KMI or 2,4,6/3,5-pentahydroxycyclohexanone) to 3D-(3,5/4)-trihydroxycyclohexane-1,2-dione (D-2,3-diketo-4-deoxy-epi-inositol). This Yersinia enterocolitica serotype O:8 / biotype 1B (strain NCTC 13174 / 8081) protein is Inosose dehydratase.